Reading from the N-terminus, the 211-residue chain is Superoxide dismutase [Cu-Zn], chloroplastic (211 aa).

The N-terminal 57 residues, 1-57 (MQAILAAAMAAQTLLFSATAPPASLFQSPSSARPFHSLRLAAGPAGAAAARALVVAD), are a transit peptide targeting the chloroplast. Cu cation contacts are provided by His103, His105, and His120. Cys114 and Cys203 are joined by a disulfide. Residues His120, His128, His137, and Asp140 each contribute to the Zn(2+) site. Position 177 (His177) interacts with Cu cation.

Belongs to the Cu-Zn superoxide dismutase family. In terms of assembly, homotetramer. The cofactor is Cu cation. Zn(2+) serves as cofactor.

The protein localises to the plastid. The protein resides in the chloroplast. The catalysed reaction is 2 superoxide + 2 H(+) = H2O2 + O2. Functionally, destroys radicals which are normally produced within the cells and which are toxic to biological systems. The polypeptide is Superoxide dismutase [Cu-Zn], chloroplastic (SODCP) (Oryza sativa subsp. japonica (Rice)).